The following is a 66-amino-acid chain: Large ribosomal subunit protein bL33 (66 aa).

Belongs to the bacterial ribosomal protein bL33 family.

This chain is Large ribosomal subunit protein bL33, found in Wolbachia pipientis wMel.